Reading from the N-terminus, the 134-residue chain is Phosphomevalonate dehydratase small subunit (134 aa).

Ser-62 functions as the Proton acceptor in the catalytic mechanism.

The protein belongs to the AcnX type II small subunit family. As to quaternary structure, heterodimer composed of a large subunit (PMDh-L) and a small subunit (PMDh-S).

It catalyses the reaction (R)-5-phosphomevalonate = (2E)-3-methyl-5-phosphooxypent-2-enoate + H2O. The protein operates within isoprenoid biosynthesis; isopentenyl diphosphate biosynthesis via mevalonate pathway. Functionally, component of a hydro-lyase that catalyzes the dehydration of mevalonate 5-phosphate (MVA5P) to form trans-anhydromevalonate 5-phosphate (tAHMP). Involved in the archaeal mevalonate (MVA) pathway, which provides fundamental precursors for isoprenoid biosynthesis, such as isopentenyl diphosphate (IPP) and dimethylallyl diphosphate (DMAPP). The chain is Phosphomevalonate dehydratase small subunit from Pyrococcus horikoshii (strain ATCC 700860 / DSM 12428 / JCM 9974 / NBRC 100139 / OT-3).